Consider the following 121-residue polypeptide: C-X-C motif chemokine 11-6 (121 aa).

A signal peptide spans 1 to 20 (MKTLAAFLLLSCLIAGEVNG). Disulfide bonds link Cys29-Cys56 and Cys31-Cys73. The interval 95–121 (QSVPHSTTTGTVKSSMTSSTSAPTAFK) is disordered. Low complexity predominate over residues 100 to 115 (STTTGTVKSSMTSSTS).

The protein belongs to the intercrine alpha (chemokine CxC) family.

Its subcellular location is the secreted. Ligand for cxcr3.2. Chemotactic for macrophages. The protein is C-X-C motif chemokine 11-6 of Danio rerio (Zebrafish).